We begin with the raw amino-acid sequence, 673 residues long: Zinc finger protein 16 (673 aa).

The segment covering 1-10 has biased composition (basic and acidic residues); that stretch reads MPSLRTRREE. The interval 1 to 42 is disordered; that stretch reads MPSLRTRREEAEMELSAPGPSPWTPAPQARVSDAPAVTHPGS. A necessary for transcription activation region spans residues 62–210; sequence YQQPDCDTRT…GVPTAESPLI (149 aa). Residues 209–231 form a C2H2-type 1; degenerate zinc finger; sequence LICNECGKTFRGNPDLIQRQIVH. Residues 237-259 form a C2H2-type 2; degenerate zinc finger; sequence FMCDDCGKTFSQNSVLKNRHXSH. Lysine 253 participates in a covalent cross-link: Glycyl lysine isopeptide (Lys-Gly) (interchain with G-Cter in SUMO2). C2H2-type zinc fingers lie at residues 284–306, 312–334, 340–362, 368–390, 396–418, 424–446, and 452–474; these read YTCTECGKAFSQNSSLKKHQKSH, YECNECGKAFRRSSNLIQHQRIH, YVCSECGKAFRRSSNLIKHHRTH, FECGECGKAFSQSAHLRKHQRVH, YECNDCGKPFSRVSNLIKHHRVH, YKCSDCGKAFSQSSSLIQHRRIH, and HVCNVCGKAFSYSSVLRKHQIIH. Residues 332-364 are required for nuclear localization; it reads RIHSGEKPYVCSECGKAFRRSSNLIKHHRTHTG. Positions 464–494 are required for nuclear localization; sequence SSVLRKHQIIHTGEKPYRCSVCGKAFSHSSA. Lysine 478 is subject to N6-acetyllysine. 7 consecutive C2H2-type zinc fingers follow at residues 480 to 502, 508 to 530, 536 to 558, 564 to 586, 592 to 614, 620 to 642, and 648 to 670; these read YRCSVCGKAFSHSSALIQHQGVH, YACHECGKTFGRSSNLILHQRVH, YECTECGKTFSQSSTLIQHQRIH, HECNQCGKAFNRSSNLIHHQKVH, YTCVECGKGFSQSSHLIQHQIIH, YKCSECGKAFSQRSVLIQHQRIH, and YDCAACGKAFSQRSKLIKHQLIH.

The protein belongs to the krueppel C2H2-type zinc-finger protein family. As to quaternary structure, interacts with INCA1; the interaction inhibits INCA1 activity and induces the cell cycle process.

The protein localises to the nucleus. Functionally, acts as a transcriptional activator. Promotes cell proliferation by facilitating the cell cycle phase transition from the S to G2/M phase. Involved in both the hemin- and phorbol myristate acetate (PMA)-induced erythroid and megakaryocytic differentiation, respectively. Also plays a role as an inhibitor of cell apoptosis. This Pan paniscus (Pygmy chimpanzee) protein is Zinc finger protein 16 (ZNF16).